The chain runs to 213 residues: Dephospho-CoA kinase (213 aa).

The DPCK domain occupies 3 to 202 (RIGLTGGIGS…QSYLALADKH (200 aa)). 11–16 (GSGKTR) provides a ligand contact to ATP.

It belongs to the CoaE family.

The protein resides in the cytoplasm. The catalysed reaction is 3'-dephospho-CoA + ATP = ADP + CoA + H(+). The protein operates within cofactor biosynthesis; coenzyme A biosynthesis; CoA from (R)-pantothenate: step 5/5. In terms of biological role, catalyzes the phosphorylation of the 3'-hydroxyl group of dephosphocoenzyme A to form coenzyme A. This chain is Dephospho-CoA kinase, found in Bordetella avium (strain 197N).